The following is a 494-amino-acid chain: Glycerol kinase 1 (494 aa).

Thr-12 serves as a coordination point for ADP. ATP contacts are provided by Thr-12, Thr-13, and Ser-14. A sn-glycerol 3-phosphate-binding site is contributed by Thr-12. Residue Arg-16 participates in ADP binding. Positions 82, 83, 134, and 243 each coordinate sn-glycerol 3-phosphate. Glycerol contacts are provided by Arg-82, Glu-83, Tyr-134, Asp-243, and Gln-244. Residues Thr-265 and Gly-308 each coordinate ADP. 4 residues coordinate ATP: Thr-265, Gly-308, Gln-312, and Gly-408. Residues Gly-408 and Asn-412 each contribute to the ADP site.

This sequence belongs to the FGGY kinase family.

The catalysed reaction is glycerol + ATP = sn-glycerol 3-phosphate + ADP + H(+). It functions in the pathway polyol metabolism; glycerol degradation via glycerol kinase pathway; sn-glycerol 3-phosphate from glycerol: step 1/1. Inhibited by fructose 1,6-bisphosphate (FBP). Functionally, key enzyme in the regulation of glycerol uptake and metabolism. Catalyzes the phosphorylation of glycerol to yield sn-glycerol 3-phosphate. This is Glycerol kinase 1 from Pseudomonas aeruginosa (strain ATCC 15692 / DSM 22644 / CIP 104116 / JCM 14847 / LMG 12228 / 1C / PRS 101 / PAO1).